Reading from the N-terminus, the 160-residue chain is SsrA-binding protein (160 aa).

Residues 132–160 (KEFDKRDTMRERDSNRELQRAVRNKGKEE) are disordered.

This sequence belongs to the SmpB family.

It localises to the cytoplasm. Its function is as follows. Required for rescue of stalled ribosomes mediated by trans-translation. Binds to transfer-messenger RNA (tmRNA), required for stable association of tmRNA with ribosomes. tmRNA and SmpB together mimic tRNA shape, replacing the anticodon stem-loop with SmpB. tmRNA is encoded by the ssrA gene; the 2 termini fold to resemble tRNA(Ala) and it encodes a 'tag peptide', a short internal open reading frame. During trans-translation Ala-aminoacylated tmRNA acts like a tRNA, entering the A-site of stalled ribosomes, displacing the stalled mRNA. The ribosome then switches to translate the ORF on the tmRNA; the nascent peptide is terminated with the 'tag peptide' encoded by the tmRNA and targeted for degradation. The ribosome is freed to recommence translation, which seems to be the essential function of trans-translation. The protein is SsrA-binding protein of Pseudomonas putida (strain ATCC 47054 / DSM 6125 / CFBP 8728 / NCIMB 11950 / KT2440).